A 456-amino-acid chain; its full sequence is Phosphomethylpyrimidine synthase (456 aa).

Substrate is bound by residues Asn80, Met109, Tyr139, His175, 195–197 (SRG), 236–239 (DSLR), and Glu275. His279 lines the Zn(2+) pocket. Tyr302 serves as a coordination point for substrate. Zn(2+) is bound at residue His343. Residues Cys423, Cys426, and Cys431 each contribute to the [4Fe-4S] cluster site.

Belongs to the ThiC family. It depends on [4Fe-4S] cluster as a cofactor.

The enzyme catalyses 5-amino-1-(5-phospho-beta-D-ribosyl)imidazole + S-adenosyl-L-methionine = 4-amino-2-methyl-5-(phosphooxymethyl)pyrimidine + CO + 5'-deoxyadenosine + formate + L-methionine + 3 H(+). It functions in the pathway cofactor biosynthesis; thiamine diphosphate biosynthesis. Its function is as follows. Catalyzes the synthesis of the hydroxymethylpyrimidine phosphate (HMP-P) moiety of thiamine from aminoimidazole ribotide (AIR) in a radical S-adenosyl-L-methionine (SAM)-dependent reaction. This chain is Phosphomethylpyrimidine synthase, found in Prochlorococcus marinus (strain AS9601).